The primary structure comprises 99 residues: Large ribosomal subunit protein eL36A (99 aa).

The protein belongs to the eukaryotic ribosomal protein eL36 family. In terms of assembly, component of the large ribosomal subunit (LSU). Mature yeast ribosomes consist of a small (40S) and a large (60S) subunit. The 40S small subunit contains 1 molecule of ribosomal RNA (18S rRNA) and at least 33 different proteins. The large 60S subunit contains 3 rRNA molecules (25S, 5.8S and 5S rRNA) and at least 46 different proteins.

The protein localises to the cytoplasm. Functionally, component of the ribosome, a large ribonucleoprotein complex responsible for the synthesis of proteins in the cell. The small ribosomal subunit (SSU) binds messenger RNAs (mRNAs) and translates the encoded message by selecting cognate aminoacyl-transfer RNA (tRNA) molecules. The large subunit (LSU) contains the ribosomal catalytic site termed the peptidyl transferase center (PTC), which catalyzes the formation of peptide bonds, thereby polymerizing the amino acids delivered by tRNAs into a polypeptide chain. The nascent polypeptides leave the ribosome through a tunnel in the LSU and interact with protein factors that function in enzymatic processing, targeting, and the membrane insertion of nascent chains at the exit of the ribosomal tunnel. This chain is Large ribosomal subunit protein eL36A (rpl3601), found in Schizosaccharomyces pombe (strain 972 / ATCC 24843) (Fission yeast).